We begin with the raw amino-acid sequence, 769 residues long: MTSYDLILAAAAGAVCLAISVALWSHGQRRNLEARIVALKTRLIQQGGSDDAPAWLDAFDTAVIAVEGGRANLVAGGEGLIACAKALGADAEVSAVVAALSDADPNYAQKLTALFERGEPCVFEARGPHGLVSVEGRAAGALAWLRLAPIDRADSGLPTAARFAAFVDSVVEPCWIAGADGQAIWGNAAFVRAVGAASAQAPALAGKSFDRGADAVVVEAAGKGERREALRWINVEGRRRAFRLSAQPLDGGGVGVFCADVTEIEDVRDAFKKHVEAHDETLNHIAEAVAIFSQTRRLSYHNTAFAELWGLEPAWLADRPTHGEVLDRLRQRRRLPETIDYAGWKAAELARYEDLGPQADDLWDLPDGRTLKVVRQPHPLGGMLLIYSDITGELRLKAQYNALIQVQQATLDKLNDAVAVFGSDGRLRLHNEAFETFWNVTPHALEAAGDFEGVVELCVPRLHDLSFWRELKGRVADPDPQMRAPTSGEVRTSDSRIVLYQSRPLPDGATLIAFADVTDTRDLQSALADRSAALAEAERLKRDFVGNVSYELRTPLTTIIGYSELLERADGISERGRNHVAAVRAAATQLARSIDDVLDMAQIDAGEMALEIEDIRVSDLLLNAQERALKDAQLGGVTLAVECEEDVGLIRGDGKRLAQTLDHLVENALRQTPPGGRVTLSARRALGEVRLDVSDTGRGVPFHVQAHIFDRFVGRDRGGPGLGLALVKALVELHGGWVALESEPGNGSTFTCHLPETQQPGAMQPELGF.

Residues 6–26 (LILAAAAGAVCLAISVALWSH) traverse the membrane as a helical segment. One can recognise a Histidine kinase domain in the interval 547-758 (NVSYELRTPL…TFTCHLPETQ (212 aa)). A Phosphotyrosine; by autocatalysis modification is found at Tyr-550.

In terms of processing, autophosphorylated.

Its subcellular location is the cell membrane. The enzyme catalyses ATP + protein L-histidine = ADP + protein N-phospho-L-histidine.. Functionally, required for cell division and growth. It catalyzes the phosphorylation of CtrA and activates transcription in vitro of the cell cycle-regulated fliF promoter. The protein is Sensor protein DivL (divL) of Caulobacter vibrioides (strain ATCC 19089 / CIP 103742 / CB 15) (Caulobacter crescentus).